We begin with the raw amino-acid sequence, 396 residues long: Purple acid phosphatase 5 (396 aa).

A signal peptide spans 1 to 13 (MSLETFPPPAGYN). N58 is a glycosylation site (N-linked (GlcNAc...) asparagine). D125 is a binding site for Fe cation. The N-linked (GlcNAc...) asparagine glycan is linked to N133. Residues D153 and Y156 each contribute to the Fe cation site. D153 contributes to the Zn(2+) binding site. Residue N190 participates in Zn(2+) binding. N190 provides a ligand contact to substrate. N238 carries an N-linked (GlcNAc...) asparagine glycan. H250 provides a ligand contact to Zn(2+). Residue H260 is the Proton donor of the active site. Residue H287 coordinates Zn(2+). Position 287-289 (287-289 (HVH)) interacts with substrate. H289 is a binding site for Fe cation. 2 N-linked (GlcNAc...) asparagine glycosylation sites follow: N303 and N360.

This sequence belongs to the metallophosphoesterase superfamily. Purple acid phosphatase family. Homodimer. Requires Fe cation as cofactor. It depends on Zn(2+) as a cofactor.

It localises to the secreted. The catalysed reaction is a phosphate monoester + H2O = an alcohol + phosphate. The chain is Purple acid phosphatase 5 (PAP5) from Arabidopsis thaliana (Mouse-ear cress).